A 239-amino-acid chain; its full sequence is AA9 family lytic polysaccharide monooxygenase C (239 aa).

Histidine 1 contacts Cu(2+). A disulfide bridge links cysteine 39 with cysteine 190. Asparagine 75 carries N-linked (GlcNAc...) asparagine glycosylation. Cu(2+) is bound at residue histidine 84. An N-linked (GlcNAc...) asparagine glycan is attached at asparagine 135. O2 contacts are provided by histidine 157 and glutamine 166. Position 168 (tyrosine 168) interacts with Cu(2+). 2 N-linked (GlcNAc...) asparagine glycosylation sites follow: asparagine 194 and asparagine 229.

Belongs to the polysaccharide monooxygenase AA9 family. Requires Cu(2+) as cofactor.

Its subcellular location is the secreted. The enzyme catalyses [(1-&gt;4)-beta-D-glucosyl]n+m + reduced acceptor + O2 = 4-dehydro-beta-D-glucosyl-[(1-&gt;4)-beta-D-glucosyl]n-1 + [(1-&gt;4)-beta-D-glucosyl]m + acceptor + H2O.. Functionally, lytic polysaccharide monooxygenase (LPMO) that depolymerizes crystalline and amorphous polysaccharides via the oxidation of scissile alpha- or beta-(1-4)-glycosidic bonds, yielding C1 or C4 oxidation products. Catalysis by LPMOs requires the reduction of the active-site copper from Cu(II) to Cu(I) by a reducing agent and H(2)O(2) or O(2) as a cosubstrate. This is AA9 family lytic polysaccharide monooxygenase C from Gloeophyllum trabeum (Brown rot fungus).